A 156-amino-acid polypeptide reads, in one-letter code: Small ribosomal subunit protein uS7 (156 aa).

It belongs to the universal ribosomal protein uS7 family. Part of the 30S ribosomal subunit. Contacts proteins S9 and S11.

In terms of biological role, one of the primary rRNA binding proteins, it binds directly to 16S rRNA where it nucleates assembly of the head domain of the 30S subunit. Is located at the subunit interface close to the decoding center, probably blocks exit of the E-site tRNA. The chain is Small ribosomal subunit protein uS7 from Limosilactobacillus reuteri (strain DSM 20016) (Lactobacillus reuteri).